Consider the following 156-residue polypeptide: Arginine repressor (156 aa).

Belongs to the ArgR family.

Its subcellular location is the cytoplasm. The protein operates within amino-acid biosynthesis; L-arginine biosynthesis [regulation]. Its function is as follows. Regulates arginine biosynthesis genes. This is Arginine repressor from Enterobacter sp. (strain 638).